The chain runs to 291 residues: Phosphate import ATP-binding protein PstB (291 aa).

Residues 45–286 (YSTQNLDLWY…PADKQTEDYI (242 aa)) enclose the ABC transporter domain. 77 to 84 (GPSGCGKS) is a binding site for ATP.

The protein belongs to the ABC transporter superfamily. Phosphate importer (TC 3.A.1.7) family. As to quaternary structure, the complex is composed of two ATP-binding proteins (PstB), two transmembrane proteins (PstC and PstA) and a solute-binding protein (PstS).

It is found in the cell membrane. It catalyses the reaction phosphate(out) + ATP + H2O = ADP + 2 phosphate(in) + H(+). Functionally, part of the ABC transporter complex PstSACB involved in phosphate import. Responsible for energy coupling to the transport system. The sequence is that of Phosphate import ATP-binding protein PstB from Staphylococcus epidermidis (strain ATCC 12228 / FDA PCI 1200).